The primary structure comprises 143 residues: Large ribosomal subunit protein eL28y (143 aa).

This sequence belongs to the eukaryotic ribosomal protein eL28 family.

This is Large ribosomal subunit protein eL28y (RPL28C) from Arabidopsis thaliana (Mouse-ear cress).